A 376-amino-acid chain; its full sequence is Lipoyl synthase 1, chloroplastic (376 aa).

The span at 1 to 13 shows a compositional bias: polar residues; the sequence is MIEQSLSKPSFSL. 2 disordered regions span residues 1–25 and 47–75; these read MIEQ…KSKS and IDAK…DPNV. The N-terminal 35 residues, 1–35, are a transit peptide targeting the chloroplast; the sequence is MIEQSLSKPSFSLSIPIPQPPKSKSSFLCSYSKIR. Positions 107, 112, 118, 138, 142, 145, and 353 each coordinate [4Fe-4S] cluster. In terms of domain architecture, Radical SAM core spans 121–342; sequence GGGDGIATAT…KEYGESIGFR (222 aa).

The protein belongs to the radical SAM superfamily. Lipoyl synthase family. [4Fe-4S] cluster is required as a cofactor.

The protein localises to the plastid. It localises to the chloroplast. The enzyme catalyses [[Fe-S] cluster scaffold protein carrying a second [4Fe-4S](2+) cluster] + N(6)-octanoyl-L-lysyl-[protein] + 2 oxidized [2Fe-2S]-[ferredoxin] + 2 S-adenosyl-L-methionine + 4 H(+) = [[Fe-S] cluster scaffold protein] + N(6)-[(R)-dihydrolipoyl]-L-lysyl-[protein] + 4 Fe(3+) + 2 hydrogen sulfide + 2 5'-deoxyadenosine + 2 L-methionine + 2 reduced [2Fe-2S]-[ferredoxin]. Its pathway is protein modification; protein lipoylation via endogenous pathway; protein N(6)-(lipoyl)lysine from octanoyl-[acyl-carrier-protein]: step 2/2. Its function is as follows. Catalyzes the radical-mediated insertion of two sulfur atoms into the C-6 and C-8 positions of the octanoyl moiety bound to the lipoyl domains of lipoate-dependent enzymes, thereby converting the octanoylated domains into lipoylated derivatives. This Populus trichocarpa (Western balsam poplar) protein is Lipoyl synthase 1, chloroplastic.